A 101-amino-acid polypeptide reads, in one-letter code: Small ribosomal subunit protein uS14 (101 aa).

The span at 1–11 (MAKKSAIETNE) shows a compositional bias: basic and acidic residues. The segment at 1–20 (MAKKSAIETNERRRKLATGH) is disordered.

Belongs to the universal ribosomal protein uS14 family. As to quaternary structure, part of the 30S ribosomal subunit. Contacts proteins S3 and S10.

Binds 16S rRNA, required for the assembly of 30S particles and may also be responsible for determining the conformation of the 16S rRNA at the A site. The protein is Small ribosomal subunit protein uS14 of Xanthobacter autotrophicus (strain ATCC BAA-1158 / Py2).